Consider the following 149-residue polypeptide: D-aminoacyl-tRNA deacylase (149 aa).

The short motif at 137–138 is the Gly-cisPro motif, important for rejection of L-amino acids element; the sequence is GP.

Belongs to the DTD family. In terms of assembly, homodimer.

It is found in the cytoplasm. The catalysed reaction is glycyl-tRNA(Ala) + H2O = tRNA(Ala) + glycine + H(+). It catalyses the reaction a D-aminoacyl-tRNA + H2O = a tRNA + a D-alpha-amino acid + H(+). In terms of biological role, an aminoacyl-tRNA editing enzyme that deacylates mischarged D-aminoacyl-tRNAs. Also deacylates mischarged glycyl-tRNA(Ala), protecting cells against glycine mischarging by AlaRS. Acts via tRNA-based rather than protein-based catalysis; rejects L-amino acids rather than detecting D-amino acids in the active site. By recycling D-aminoacyl-tRNA to D-amino acids and free tRNA molecules, this enzyme counteracts the toxicity associated with the formation of D-aminoacyl-tRNA entities in vivo and helps enforce protein L-homochirality. The protein is D-aminoacyl-tRNA deacylase of Caldicellulosiruptor bescii (strain ATCC BAA-1888 / DSM 6725 / KCTC 15123 / Z-1320) (Anaerocellum thermophilum).